Consider the following 203-residue polypeptide: ATP-dependent Clp protease proteolytic subunit 1 (203 aa).

Ser98 acts as the Nucleophile in catalysis. His123 is an active-site residue.

It belongs to the peptidase S14 family. Fourteen ClpP subunits assemble into 2 heptameric rings which stack back to back to give a disk-like structure with a central cavity, resembling the structure of eukaryotic proteasomes.

It localises to the cytoplasm. The enzyme catalyses Hydrolysis of proteins to small peptides in the presence of ATP and magnesium. alpha-casein is the usual test substrate. In the absence of ATP, only oligopeptides shorter than five residues are hydrolyzed (such as succinyl-Leu-Tyr-|-NHMec, and Leu-Tyr-Leu-|-Tyr-Trp, in which cleavage of the -Tyr-|-Leu- and -Tyr-|-Trp bonds also occurs).. Its function is as follows. Cleaves peptides in various proteins in a process that requires ATP hydrolysis. Has a chymotrypsin-like activity. Plays a major role in the degradation of misfolded proteins. This Chlamydia felis (strain Fe/C-56) (Chlamydophila felis) protein is ATP-dependent Clp protease proteolytic subunit 1.